Consider the following 267-residue polypeptide: Neural/ectodermal development factor IMP-L2 (267 aa).

The signal sequence occupies residues methionine 1–glycine 25. 2 Ig-like C2-type domains span residues proline 48–tyrosine 149 and proline 174–tyrosine 260. 2 disulfide bridges follow: cysteine 80–cysteine 139 and cysteine 195–cysteine 244.

Detected in several sites including the ventral neuroectoderm, the tracheal pits, the pharynx and esophagus, and specific neuronal cell bodies, where it is primarily expressed.

The protein localises to the secreted. It localises to the extracellular space. Functionally, essential developmental role during embryogenesis, in particular the normal development of the nervous system. May be involved in some aspect of cell adhesion. In Drosophila melanogaster (Fruit fly), this protein is Neural/ectodermal development factor IMP-L2 (ImpL2).